The following is a 293-amino-acid chain: MATTRGKKTYPQLPPAPDDYPTFPDKSTWPVVFPEIPAGTNGRFARPPQHTSKAAAPKIPADQVPNHVAVVMDGNGRWATQRGLGRTEGHKMGEAVLIDITCGAIEIGIKHLTVYAFSTENWKRSTEEVRFLMGFNREVVRRRRENLNDMGVRMRWVGSRPRMWRSVIKEFDIAEQMTVDNDVITINYCVNYGGRTEIVEAARALAQEAVDGKINPARISEAMFAKHLHRADIPDVDLFIRTSGEQRASNFLLWQAAYAEYVFQDKLWPDYDRRDLWAACEEYVNRNRRFGRA.

A disordered region spans residues 1–24 (MATTRGKKTYPQLPPAPDDYPTFP). Residue Asp-73 is part of the active site. Asp-73 provides a ligand contact to Mg(2+). Substrate contacts are provided by residues 74 to 77 (GNGR), Trp-78, Arg-86, His-90, and 118 to 120 (STE). Catalysis depends on Asn-121, which acts as the Proton acceptor. Substrate contacts are provided by residues Trp-122, Arg-124, Arg-241, and 247–249 (RAS). Residue Glu-260 participates in Mg(2+) binding.

This sequence belongs to the UPP synthase family. In terms of assembly, homodimer. The cofactor is Mg(2+).

The protein localises to the cell membrane. The catalysed reaction is (2Z,6E)-farnesyl diphosphate + 7 isopentenyl diphosphate = (2Z,6Z,10Z,14Z,18Z,22Z,26Z,30Z,34E)-decaprenyl diphosphate + 7 diphosphate. It carries out the reaction n isopentenyl diphosphate + (2E,6E)-farnesyl diphosphate = a di-trans,poly-cis-polyprenyl diphosphate + n diphosphate. In terms of biological role, catalyzes the sequential condensation of isopentenyl diphosphate (IPP) in the cis configuration with (2Z,6E)-farnesyl diphosphate (Z-FPP or EZ-FPP) generating the 50 carbon product trans,polycis-decaprenyl diphosphate. When (2E,6E)-farnesyl diphosphate (E-FPP or EE-FPP) is used in vitro, both primary products decaprenyl diphosphate and heptaprenyl diphosphate are synthesized. It is probably due to the fact that M.smegmatis synthesizes both (2E,6E,10E)-geranylgeranyl diphosphate (EEE-GGPP) and (2E,6E,10Z)-geranylgeranyl diphosphate (EEZ-GGPP). Can also accept many different allylic substrates, including E-geranyl diphosphate (E-GPP), neryl diphosphate (NPP), and all-trans-geranyl-geranyl diphosphate. The chain is Decaprenyl diphosphate synthase (uppS) from Mycolicibacterium smegmatis (strain ATCC 700084 / mc(2)155) (Mycobacterium smegmatis).